The following is a 3799-amino-acid chain: Polyketide synthase GfsE (3799 aa).

The Ketosynthase family 3 (KS3) 1 domain occupies 33–459 (HEPIAIIGMS…GTNAHAILEE (427 aa)). Module regions lie at residues 33–1730 (HEPI…RSSA) and 1749–3494 (DEAI…RTDL). Residues cysteine 206, histidine 341, and histidine 381 each act as for beta-ketoacyl synthase 1 activity in the active site. The disordered stretch occupies residues 462-496 (AATGNPTEADTDQEPAASASPDRTTTLPAVPWPLS). Residues 582–895 (FVFPGQGSQW…LGEAHAHGAD (314 aa)) enclose the Malonyl-CoA:ACP transacylase (MAT) 1 domain. Residues 944–1069 (HPLFGAVVEV…GVLELEARPE (126 aa)) are N-terminal hotdog fold 1. The 279-residue stretch at 944–1222 (HPLFGAVVEV…SRPVAEEQLG (279 aa)) folds into the PKS/mFAS DH 1 domain. The active-site Proton acceptor; for dehydratase activity 1 is the histidine 976. Residues 1081–1222 (AEVVPVEGLY…SRPVAEEQLG (142 aa)) are C-terminal hotdog fold 1. Aspartate 1142 (proton donor; for dehydratase activity 1) is an active-site residue. A Ketoreductase (KR) 1 domain is found at 1382 to 1554 (LLVTGASGVL…TSLSWGLWAE (173 aa)). The Carrier 1 domain maps to 1652–1730 (EAERAVLELV…ALATHIRSSA (79 aa)). O-(pantetheine 4'-phosphoryl)serine is present on serine 1690. Residues 1749–2174 (DEAIAIVGMA…GTNAHVILEQ (426 aa)) form the Ketosynthase family 3 (KS3) 2 domain. Active-site for beta-ketoacyl synthase 2 activity residues include cysteine 1921, histidine 2056, and histidine 2096. One can recognise a Malonyl-CoA:ACP transacylase (MAT) 2 domain in the interval 2284-2604 (FVFPGQGSQW…VSLAKVHTHG (321 aa)). Positions 2656 to 2781 (HPLLTGVVDL…GTLAVDADHD (126 aa)) are N-terminal hotdog fold 2. The 281-residue stretch at 2656–2936 (HPLLTGVVDL…TRPVTAAQFA (281 aa)) folds into the PKS/mFAS DH 2 domain. Histidine 2688 serves as the catalytic Proton acceptor; for dehydratase activity 2. A C-terminal hotdog fold 2 region spans residues 2794 to 2936 (ADPVDLTEVY…TRPVTAAQFA (143 aa)). Aspartate 2855 serves as the catalytic Proton donor; for dehydratase activity 2. Residues 3142-3314 (LLVTGASGVL…TALSWGLWAE (173 aa)) form the Ketoreductase (KR) 2 domain. Residues 3419–3494 (AALLDLVGAQ…ALAAQLRTDL (76 aa)) form the Carrier 2 domain. O-(pantetheine 4'-phosphoryl)serine is present on serine 3454.

Pantetheine 4'-phosphate is required as a cofactor.

Its pathway is antibiotic biosynthesis. Fifth protein in the synthesis of the 16-membered macrolide antibiotics FD-891 and FD-892. Composed of 2 modules. Modifies the product of GfsD by multiple rounds of addition of methylmalonyl-CoA and other modifications to help generate the final products. The chain is Polyketide synthase GfsE from Streptomyces halstedii.